The following is a 324-amino-acid chain: MKLIIALAALIVVINAASDQELWADFKKTHARTYKSLREEKLRFNIFQDTLRQIAEHNVKYENGESTYYLAINKFSDITDEEFRDMLMKNEASRPNLEGLEVADLTVGAAPESIDWRSKGVVLPVRNQGECGSCWALSTAAAIESQSAIKSGSKVPLSPQQLVDCSTSYGNHGCNGGFAVNGFEYVKDNGLESDADYPYSGKEDKCKANDKSRSVVELTGYKKVTASETSLKEAVGTIGPISAVVFGKPMKSYGGGIFDDSSCLGDNLHHGVNVVGYGIENGQKYWIIKNTWGADWGESGYIRLIRDTDHSCGVEKMASYPILA.

An N-terminal signal peptide occupies residues 1 to 16; sequence MKLIIALAALIVVINA. 3 disulfides stabilise this stretch: Cys131-Cys174, Cys165-Cys206, and Cys263-Cys312. Cys134 is a catalytic residue. Active-site residues include His270 and Asn290.

Belongs to the peptidase C1 family. In terms of tissue distribution, expressed in larval carcasses and gut, and adult gut.

The chain is Cathepsin L-like proteinase from Phaedon cochleariae (Mustard beetle).